A 457-amino-acid chain; its full sequence is Zinc finger protein ZPR1 (457 aa).

Over residues 1 to 13 (MSTVSDPNSSNPP) the composition is skewed to polar residues. The interval 1–21 (MSTVSDPNSSNPPESAGNIRP) is disordered. 2 consecutive C4-type zinc fingers follow at residues 43-75 (CMNC…CDHC) and 261-293 (CPSC…CGAC). Residues 414-457 (VQSLSDDDSEPDDKLTVERYDRSYEDNEDLGLNDMKTEGYEEKA) are disordered. Composition is skewed to basic and acidic residues over residues 425–438 (DDKL…RSYE) and 448–457 (MKTEGYEEKA).

This sequence belongs to the ZPR1 family.

Its function is as follows. Might mediate EGFR and FGFR signal transduction cascades required for lumen formation in tracheal cells. The chain is Zinc finger protein ZPR1 from Drosophila melanogaster (Fruit fly).